Here is a 121-residue protein sequence, read N- to C-terminus: Ribonuclease P protein component (121 aa).

It belongs to the RnpA family. In terms of assembly, consists of a catalytic RNA component (M1 or rnpB) and a protein subunit.

The catalysed reaction is Endonucleolytic cleavage of RNA, removing 5'-extranucleotides from tRNA precursor.. Functionally, RNaseP catalyzes the removal of the 5'-leader sequence from pre-tRNA to produce the mature 5'-terminus. It can also cleave other RNA substrates such as 4.5S RNA. The protein component plays an auxiliary but essential role in vivo by binding to the 5'-leader sequence and broadening the substrate specificity of the ribozyme. The protein is Ribonuclease P protein component of Desulfosudis oleivorans (strain DSM 6200 / JCM 39069 / Hxd3) (Desulfococcus oleovorans).